Here is a 392-residue protein sequence, read N- to C-terminus: MLPNGEDDSDLLRLVKELQAYLVRNDKLEKENHELRQEVARLRAQVSNLKSHENERKSMLWKKLQSSYDGSNTDGSNLKAPESVKSNTKGQEVRNPNPKPTIQGQSTATKPPPPPPLPSKRTLGKRSVRRAPEVVEFYRALTKRESHMGNKINQNGVLSPAFNRNMIGEIENRSKYLSDIKSDTDRHRDHIHILISKVEAATFTDISEVETFVKWIDEELSSLVDERAVLKHFPKWPERKVDSLREAACNYKRPKNLGNEILSFKDNPKDSLTQALQRIQSLQDRLEESVNNTEKMRDSTGKRYKDFQIPWEWMLDTGLIGQLKYSSLRLAQEYMKRIAKELESNGSGKEGNLMLQGVRFAYTIHQFAGGFDGETLSIFHELKKITTGETRG.

Residues 11–52 are a coiled coil; it reads LLRLVKELQAYLVRNDKLEKENHELRQEVARLRAQVSNLKSH. 2 stretches are compositionally biased toward polar residues: residues 65–76 and 100–109; these read QSSYDGSNTDGS and PTIQGQSTAT. A disordered region spans residues 65–128; that stretch reads QSSYDGSNTD…SKRTLGKRSV (64 aa). The stretch at 269-299 forms a coiled coil; that stretch reads KDSLTQALQRIQSLQDRLEESVNNTEKMRDS.

The protein belongs to the IPGA1 family.

The protein localises to the cytoplasm. Its subcellular location is the cytoskeleton. Functionally, microtubule-associated protein probably involved in the regulation of microtubule organization. The protein is INCREASED PETAL GROWTH ANISOTROPY 1-like protein 1 of Arabidopsis thaliana (Mouse-ear cress).